Here is a 266-residue protein sequence, read N- to C-terminus: ES1 protein homolog, mitochondrial (266 aa).

Residues 1–39 (MAAVRVLVSPRLASALLPLSGRHRTTSQRAAIHSSAPRP) constitute a mitochondrion transit peptide. An N6-acetyllysine mark is found at Lys-149, Lys-155, and Lys-162. Position 201 is an N6-acetyllysine; alternate (Lys-201). Lys-201 bears the N6-succinyllysine; alternate mark. At Lys-217 the chain carries N6-acetyllysine. Residues Lys-221 and Lys-231 each carry the N6-acetyllysine; alternate modification. 2 positions are modified to N6-succinyllysine; alternate: Lys-221 and Lys-231.

It belongs to the ES1 family.

The protein resides in the mitochondrion. The chain is ES1 protein homolog, mitochondrial from Rattus norvegicus (Rat).